A 154-amino-acid polypeptide reads, in one-letter code: Protein X (154 aa).

Positions 68–117 are mitochondrial targeting sequence; the sequence is PCALRFTSARRMETTVNAHWNLPKVLHKRTLGLSAMSTTDLEAYFKDCVF.

Belongs to the orthohepadnavirus protein X family. In terms of assembly, may form homodimer. May interact with host CEBPA, CFLAR, CREB1, DDB1, E4F1, HBXIP, HSPD1/HSP60, NFKBIA, POLR2E and SMAD4. Interacts with host SMC5-SMC6 complex and induces its degradation. Interacts with host TRPC4AP; leading to prevent ubiquitination of TRPC4AP. Interacts with host PLSCR1; this interaction promotes ubiquitination and degradation of HBx and impairs HBx-mediated cell proliferation. In terms of processing, a fraction may be phosphorylated in insect cells and HepG2 cells, a human hepatoblastoma cell line. Phosphorylated in vitro by host protein kinase C or mitogen-activated protein kinase. N-acetylated in insect cells.

The protein localises to the host cytoplasm. It localises to the host nucleus. The protein resides in the host mitochondrion. In terms of biological role, multifunctional protein that plays a role in silencing host antiviral defenses and promoting viral transcription. Does not seem to be essential for HBV infection. May be directly involved in development of cirrhosis and liver cancer (hepatocellular carcinoma). Most of cytosolic activities involve modulation of cytosolic calcium. The effect on apoptosis is controversial depending on the cell types in which the studies have been conducted. May induce apoptosis by localizing in mitochondria and causing loss of mitochondrial membrane potential. May also modulate apoptosis by binding host CFLAR, a key regulator of the death-inducing signaling complex (DISC). Promotes viral transcription by using the host E3 ubiquitin ligase DDB1 to target the SMC5-SMC6 complex to proteasomal degradation. This host complex would otherwise bind to viral episomal DNA, and prevents its transcription. Moderately stimulates transcription of many different viral and cellular transcription elements. Promoters and enhancers stimulated by HBx contain DNA binding sites for NF-kappa-B, AP-1, AP-2, c-EBP, ATF/CREB, or the calcium-activated factor NF-AT. The chain is Protein X from Hepatitis B virus genotype B2 (isolate Vietnam/9873/1997) (HBV-B).